The primary structure comprises 556 residues: Mitochondrial distribution and morphology protein 34-2 (556 aa).

The SMP-LTD domain occupies 1–195; that stretch reads MAFNFNWSPL…LPAIIHRLSL (195 aa). Disordered stretches follow at residues 206–239, 299–423, and 440–473; these read EEMNDETDNTAKSSEGPGQDPLASPPQDPVDSLG, TDTS…PVTP, and HLPSFSRPTRRDADLSYSHETIRGPKAEDVDATP. A compositionally biased stretch (polar residues) spans 299–333; the sequence is TDTSEFPSSVISPLSPTLSREQSQMGSMSSLHETA. Over residues 334 to 357 the composition is skewed to low complexity; that stretch reads SNASMQSRPSMSSHSFSTSTYGLS. Residues 362–374 are compositionally biased toward basic residues; that stretch reads RHSKAHARKRKKR. Residues 375–385 show a composition bias toward basic and acidic residues; it reads VVDLRRPKTTD. Residues 391 to 402 show a composition bias toward polar residues; that stretch reads SDESVMTESSRP. Residues 459–468 are compositionally biased toward basic and acidic residues; the sequence is ETIRGPKAED.

It belongs to the MDM34 family. In terms of assembly, component of the ER-mitochondria encounter structure (ERMES) or MDM complex, composed of mmm1, mdm10, mdm12 and mdm34.

It is found in the mitochondrion outer membrane. In terms of biological role, component of the ERMES/MDM complex, which serves as a molecular tether to connect the endoplasmic reticulum (ER) and mitochondria. Components of this complex are involved in the control of mitochondrial shape and protein biogenesis, and function in nonvesicular lipid trafficking between the ER and mitochondria. Mdm34 is required for the interaction of the ER-resident membrane protein mmm1 and the outer mitochondrial membrane-resident beta-barrel protein mdm10. This Penicillium rubens (strain ATCC 28089 / DSM 1075 / NRRL 1951 / Wisconsin 54-1255) (Penicillium chrysogenum) protein is Mitochondrial distribution and morphology protein 34-2.